The sequence spans 72 residues: Translation initiation factor IF-1 (72 aa).

Positions 1–72 (MAKEDTLEFP…SKGRINYRFK (72 aa)) constitute an S1-like domain.

The protein belongs to the IF-1 family. In terms of assembly, component of the 30S ribosomal translation pre-initiation complex which assembles on the 30S ribosome in the order IF-2 and IF-3, IF-1 and N-formylmethionyl-tRNA(fMet); mRNA recruitment can occur at any time during PIC assembly.

The protein localises to the cytoplasm. Functionally, one of the essential components for the initiation of protein synthesis. Stabilizes the binding of IF-2 and IF-3 on the 30S subunit to which N-formylmethionyl-tRNA(fMet) subsequently binds. Helps modulate mRNA selection, yielding the 30S pre-initiation complex (PIC). Upon addition of the 50S ribosomal subunit IF-1, IF-2 and IF-3 are released leaving the mature 70S translation initiation complex. The sequence is that of Translation initiation factor IF-1 from Cereibacter sphaeroides (strain ATCC 17029 / ATH 2.4.9) (Rhodobacter sphaeroides).